Here is a 308-residue protein sequence, read N- to C-terminus: Type II restriction enzyme MamI (308 aa).

It carries out the reaction Endonucleolytic cleavage of DNA to give specific double-stranded fragments with terminal 5'-phosphates.. Its function is as follows. A P subtype restriction enzyme that recognizes the double-stranded sequence 5'-GATNNNNATC-3' and cleaves after N-5. This is Type II restriction enzyme MamI from Microbacterium ammoniaphilum.